Reading from the N-terminus, the 353-residue chain is MDQNKQKALAAALGQIEKQFGKGSIMRLGDSKTMDIEAISTGSLSLDVALGIGGLPCGRIVEIYGPESSGKTTLTLQVIAEAQKKGKVCAFIDAEHALDPIYAAKLGVNVDDLLISQPDTGEQALEICDMLVRSNAVDVIIVDSVAALTPKAEIEGEMGDSHVGLQARLMSQALRKLTANIKNANCLCIFINQIRMKIGVMFGSPETTTGGNALKFYASVRLDIRRIGAIKEGDEVVGNETRVKVVKNKVAPPFKQAEFQIFYGVGISKEGELVDLGVKHKLIDKAGAWYSYNGEKIGQGKANVMKLFTENKVMAAEVEARLRELLLSGDVPAEKPVVADADELEAESEQEFE.

Residue 65 to 72 participates in ATP binding; the sequence is GPESSGKT.

The protein belongs to the RecA family.

The protein localises to the cytoplasm. Its function is as follows. Can catalyze the hydrolysis of ATP in the presence of single-stranded DNA, the ATP-dependent uptake of single-stranded DNA by duplex DNA, and the ATP-dependent hybridization of homologous single-stranded DNAs. It interacts with LexA causing its activation and leading to its autocatalytic cleavage. This chain is Protein RecA, found in Aeromonas salmonicida (strain A449).